Here is a 792-residue protein sequence, read N- to C-terminus: G-type lectin S-receptor-like serine/threonine-protein kinase At1g61440 (792 aa).

The first 17 residues, 1 to 17 (MGKKRIVLLLFISFSYA), serve as a signal peptide directing secretion. One can recognise a Bulb-type lectin domain in the interval 18–137 (EITKESPLSI…VTGRTLWESF (120 aa)). The Extracellular portion of the chain corresponds to 18–419 (EITKESPLSI…ELDVHKRKMT (402 aa)). N46, N127, and N229 each carry an N-linked (GlcNAc...) asparagine glycan. Residues 271-307 (PANSCDIYGVCGPFGFCVISDPPKCKCFKGFVPKSIE) enclose the EGF-like; atypical domain. Cystine bridges form between C275-C287 and C281-C295. N313, N329, and N368 each carry an N-linked (GlcNAc...) asparagine glycan. The PAN domain occupies 326–408 (CQGNSTGKDA…GEILSIRLAH (83 aa)). Disulfide bonds link C361–C382 and C365–C371. The chain crosses the membrane as a helical span at residues 420-440 (IVASTVSLTLFVILGFATFGF). The Cytoplasmic segment spans residues 441 to 792 (WRNRVKHHDA…EMTESVILGR (352 aa)). The region spanning 478–763 (FSLSNKLGHG…DLPLPKQPTF (286 aa)) is the Protein kinase domain. Residues 484 to 492 (LGHGGFGSV) and K506 each bind ATP. S512 and S527 each carry phosphoserine. Residues 567–584 (RKRLELDWPKRFDIIQGI) are caM-binding. The active-site Proton acceptor is D603. A phosphoserine mark is found at S607 and S620. T637 is modified (phosphothreonine). S680 and S774 each carry phosphoserine.

Belongs to the protein kinase superfamily. Ser/Thr protein kinase family.

It localises to the cell membrane. It carries out the reaction L-seryl-[protein] + ATP = O-phospho-L-seryl-[protein] + ADP + H(+). It catalyses the reaction L-threonyl-[protein] + ATP = O-phospho-L-threonyl-[protein] + ADP + H(+). The chain is G-type lectin S-receptor-like serine/threonine-protein kinase At1g61440 from Arabidopsis thaliana (Mouse-ear cress).